The following is a 246-amino-acid chain: tRNA pseudouridine synthase A (246 aa).

Catalysis depends on Asp51, which acts as the Nucleophile. Tyr105 contacts substrate.

The protein belongs to the tRNA pseudouridine synthase TruA family.

It carries out the reaction uridine(38/39/40) in tRNA = pseudouridine(38/39/40) in tRNA. Functionally, formation of pseudouridine at positions 38, 39 and 40 in the anticodon stem and loop of transfer RNAs. The protein is tRNA pseudouridine synthase A of Thermoplasma volcanium (strain ATCC 51530 / DSM 4299 / JCM 9571 / NBRC 15438 / GSS1).